The primary structure comprises 183 residues: NADH dehydrogenase [ubiquinone] iron-sulfur protein 4, mitochondrial (183 aa).

Residues 1–28 constitute a mitochondrion transit peptide; the sequence is MSALRQVMCRSTASLQLYQANRAAAARW. Ser-181 carries the post-translational modification Phosphoserine.

Belongs to the complex I NDUFS4 subunit family.

The protein resides in the mitochondrion inner membrane. Accessory subunit of the mitochondrial membrane respiratory chain NADH dehydrogenase (Complex I), that is believed not to be involved in catalysis. Complex I functions in the transfer of electrons from NADH to the respiratory chain. The immediate electron acceptor for the enzyme is believed to be ubiquinone. This is NADH dehydrogenase [ubiquinone] iron-sulfur protein 4, mitochondrial from Drosophila melanogaster (Fruit fly).